The primary structure comprises 411 residues: LIM domain-binding protein 1 (411 aa).

Serine 2 is subject to N-acetylserine. Threonine 61 is subject to Phosphothreonine. Residues serine 265 and serine 302 each carry the phosphoserine modification. Disordered regions lie at residues 284–330 (PPAE…TFAL) and 367–411 (DAAN…QASQ). The span at 302 to 318 (SGGSTMSSGGGNTNNSN) shows a compositional bias: low complexity. The LIM interaction domain (LID) domain maps to 336–375 (DVMVVGEPTLMGGEFGDEDERLITRLENTQFDAANGIDDE).

It belongs to the LDB family. In terms of assembly, interacts with ESR1. Forms homodimers and heterodimers. Interacts with and activates LHX1/LIM1. Interacts with the LIM domains of ISL1 and LMO2. Can assemble in a complex with LMO2 and TAL1/SCL but does not interact with TAL1/SCL directly. Strongly interacts with the LIM2 domain of LMX1A and more weakly with the LIM1 domain. Homodimerization is not required for, and does not effect, LMX1A-binding. Component of a nuclear TAL-1 complex composed at least of CBFA2T3, LDB1, TAL1 and TCF3. Interacts with LHX6 and LHX9. At neuronal promoters, forms a complex with LHX3 involved in the specification of interneurons, in motor neurons, it is displaced by ISL1 to form a ternary complex in which ISL1 contacts both LHX3 and LDB1. Interacts with SLK; leading to negatively regulate SLK kinase activity. Interacts with YWHAZ. Interacts with PRDM1/BLIMP1. Interacts with LMO4. Interacts with RLIM/RNF12; the interaction inhibits the ubiquitination of LMO proteins. Post-translationally, ubiquitinated by RLIM/RNF12, leading to its degradation by the proteasome. As to expression, expressed in multiple adult tissues including heart, brain, liver, kidney, testis, lung and muscle, with expression highest in the pituitary gland and skin.

The protein resides in the nucleus. Functionally, binds to the LIM domain of a wide variety of LIM domain-containing transcription factors. May regulate the transcriptional activity of LIM-containing proteins by determining specific partner interactions. Plays a role in the development of interneurons and motor neurons in cooperation with LHX3 and ISL1. Acts synergistically with LHX1/LIM1 in axis formation and activation of gene expression. Acts with LMO2 in the regulation of red blood cell development, maintaining erythroid precursors in an immature state. The sequence is that of LIM domain-binding protein 1 (Ldb1) from Mus musculus (Mouse).